Consider the following 259-residue polypeptide: Isoprenyl transferase (259 aa).

Aspartate 33 is a catalytic residue. Residue aspartate 33 coordinates Mg(2+). Substrate is bound by residues 34–37, tryptophan 38, histidine 51, and 79–81; these read GNRR and STE. Asparagine 82 serves as the catalytic Proton acceptor. Substrate is bound by residues arginine 86, arginine 208, and 214-216; that span reads RMS. Glutamate 227 provides a ligand contact to Mg(2+).

This sequence belongs to the UPP synthase family. Homodimer. The cofactor is Mg(2+).

Catalyzes the condensation of isopentenyl diphosphate (IPP) with allylic pyrophosphates generating different type of terpenoids. This is Isoprenyl transferase from Streptomyces fradiae (Streptomyces roseoflavus).